The sequence spans 112 residues: 2Fe-2S ferredoxin (112 aa).

The 103-residue stretch at 5–107 folds into the 2Fe-2S ferredoxin-type domain; it reads IKVTFIVNDG…GIKVRLPSAT (103 aa). C42, C48, C51, and C88 together coordinate [2Fe-2S] cluster.

It belongs to the adrenodoxin/putidaredoxin family. The cofactor is [2Fe-2S] cluster.

Ferredoxin are iron-sulfur proteins that transfer electrons in a wide variety of metabolic reactions. This Rickettsia felis (strain ATCC VR-1525 / URRWXCal2) (Rickettsia azadi) protein is 2Fe-2S ferredoxin (fdxB).